The following is a 55-amino-acid chain: Large ribosomal subunit protein bL33 (55 aa).

This sequence belongs to the bacterial ribosomal protein bL33 family.

This chain is Large ribosomal subunit protein bL33, found in Bartonella henselae (strain ATCC 49882 / DSM 28221 / CCUG 30454 / Houston 1) (Rochalimaea henselae).